A 348-amino-acid polypeptide reads, in one-letter code: Lipooligosaccharide heptosyltransferase 2 (348 aa).

This sequence belongs to the glycosyltransferase 9 family.

It carries out the reaction an L-alpha-D-Hep-(1-&gt;5)-[alpha-Kdo-(2-&gt;4)]-alpha-Kdo-(2-&gt;6)-lipid A + ADP-L-glycero-beta-D-manno-heptose = an L-alpha-D-Hep-(1-&gt;3)-L-alpha-D-Hep-(1-&gt;5)-[alpha-Kdo-(2-&gt;4)]-alpha-Kdo-(2-&gt;6)-lipid A + ADP + H(+). It functions in the pathway bacterial outer membrane biogenesis; LOS core biosynthesis. Its function is as follows. Glycosyltransferase involved in the biosynthesis of the core oligosaccharide region of lipooligosaccharide (LOS). Catalyzes the addition of a heptose unit to the heptosyl-Kdo2-lipid A module. The chain is Lipooligosaccharide heptosyltransferase 2 from Haemophilus ducreyi (strain 35000HP / ATCC 700724).